A 130-amino-acid chain; its full sequence is Small ribosomal subunit protein uS11 (130 aa).

This sequence belongs to the universal ribosomal protein uS11 family. In terms of assembly, part of the 30S ribosomal subunit. Interacts with proteins S7 and S18. Binds to IF-3.

Located on the platform of the 30S subunit, it bridges several disparate RNA helices of the 16S rRNA. Forms part of the Shine-Dalgarno cleft in the 70S ribosome. This is Small ribosomal subunit protein uS11 from Dehalococcoides mccartyi (strain ATCC BAA-2100 / JCM 16839 / KCTC 5957 / BAV1).